We begin with the raw amino-acid sequence, 356 residues long: NADH-quinone oxidoreductase subunit H (356 aa).

The next 8 helical transmembrane spans lie at 18-38 (IVMVAQSVLLLVVLLIAIAYI), 87-107 (GVFLLAPLVSCVLALAAWAVI), 120-140 (VGILYIFAISSLSIYGIIMGG), 166-186 (IGFVIITVLLCAGSLNLSAIV), 202-222 (WLTFLNWYWLPLLPMFVVFYV), 257-277 (LFMLGEYVAITTMCAMGAILF), 292-312 (WVPGVIWFSLKLFFMFFLIAM), and 333-353 (FLPLSLAMVVIVAAVLQFAGI).

It belongs to the complex I subunit 1 family. As to quaternary structure, NDH-1 is composed of 14 different subunits. Subunits NuoA, H, J, K, L, M, N constitute the membrane sector of the complex.

Its subcellular location is the cell inner membrane. The catalysed reaction is a quinone + NADH + 5 H(+)(in) = a quinol + NAD(+) + 4 H(+)(out). Functionally, NDH-1 shuttles electrons from NADH, via FMN and iron-sulfur (Fe-S) centers, to quinones in the respiratory chain. The immediate electron acceptor for the enzyme in this species is believed to be ubiquinone. Couples the redox reaction to proton translocation (for every two electrons transferred, four hydrogen ions are translocated across the cytoplasmic membrane), and thus conserves the redox energy in a proton gradient. This subunit may bind ubiquinone. This is NADH-quinone oxidoreductase subunit H from Nitrobacter winogradskyi (strain ATCC 25391 / DSM 10237 / CIP 104748 / NCIMB 11846 / Nb-255).